Reading from the N-terminus, the 282-residue chain is Undecaprenyl-diphosphatase (282 aa).

8 consecutive transmembrane segments (helical) span residues 2–22, 47–67, 90–110, 115–135, 152–172, 190–210, 225–245, and 259–279; these read FDFI…FLPV, FTAV…IQLY, WIKV…LNNF, LLNP…FIVI, ITFK…VPGT, FVAA…VTIL, AQLF…LFAI, and IFGW…IAGL.

It belongs to the UppP family.

The protein resides in the cell membrane. It catalyses the reaction di-trans,octa-cis-undecaprenyl diphosphate + H2O = di-trans,octa-cis-undecaprenyl phosphate + phosphate + H(+). In terms of biological role, catalyzes the dephosphorylation of undecaprenyl diphosphate (UPP). Confers resistance to bacitracin. The protein is Undecaprenyl-diphosphatase of Leuconostoc citreum (strain KM20).